The primary structure comprises 768 residues: Ribosomal RNA large subunit methyltransferase K/L (768 aa).

A THUMP domain is found at 60–175; it reads DLYKICLWSR…DKQAELYLDL (116 aa).

Belongs to the methyltransferase superfamily. RlmKL family.

Its subcellular location is the cytoplasm. The enzyme catalyses guanosine(2445) in 23S rRNA + S-adenosyl-L-methionine = N(2)-methylguanosine(2445) in 23S rRNA + S-adenosyl-L-homocysteine + H(+). It carries out the reaction guanosine(2069) in 23S rRNA + S-adenosyl-L-methionine = N(2)-methylguanosine(2069) in 23S rRNA + S-adenosyl-L-homocysteine + H(+). Its function is as follows. Specifically methylates the guanine in position 2445 (m2G2445) and the guanine in position 2069 (m7G2069) of 23S rRNA. This Psychrobacter arcticus (strain DSM 17307 / VKM B-2377 / 273-4) protein is Ribosomal RNA large subunit methyltransferase K/L.